The following is a 188-amino-acid chain: Peptidyl-tRNA hydrolase (188 aa).

Position 14 (Tyr14) interacts with tRNA. His19 (proton acceptor) is an active-site residue. Positions 64, 66, and 112 each coordinate tRNA.

The protein belongs to the PTH family. As to quaternary structure, monomer.

It localises to the cytoplasm. It catalyses the reaction an N-acyl-L-alpha-aminoacyl-tRNA + H2O = an N-acyl-L-amino acid + a tRNA + H(+). Hydrolyzes ribosome-free peptidyl-tRNAs (with 1 or more amino acids incorporated), which drop off the ribosome during protein synthesis, or as a result of ribosome stalling. In terms of biological role, catalyzes the release of premature peptidyl moieties from peptidyl-tRNA molecules trapped in stalled 50S ribosomal subunits, and thus maintains levels of free tRNAs and 50S ribosomes. The sequence is that of Peptidyl-tRNA hydrolase from Clostridium novyi (strain NT).